The chain runs to 119 residues: U9-hexatoxin-Hi1 (119 aa).

Positions 1–17 (MKLYLVILVTSVALAAA) are cleaved as a signal peptide. Residues 18–53 (SPTRTKEEPIEDELLEALLSVEKSLFNEETTVMEKR) constitute a propeptide that is removed on maturation. Intrachain disulfides connect cysteine 55–cysteine 73, cysteine 66–cysteine 79, cysteine 70–cysteine 117, and cysteine 72–cysteine 88.

The protein belongs to the neurotoxin 03 (Tx2) family. 03 subfamily. Expressed by the venom gland.

It localises to the secreted. In terms of biological role, probable ion channel inhibitor. The chain is U9-hexatoxin-Hi1 from Hadronyche infensa (Fraser island funnel-web spider).